The sequence spans 252 residues: Trans-aconitate 2-methyltransferase (252 aa).

It belongs to the methyltransferase superfamily. Tam family.

It is found in the cytoplasm. It catalyses the reaction trans-aconitate + S-adenosyl-L-methionine = (E)-3-(methoxycarbonyl)pent-2-enedioate + S-adenosyl-L-homocysteine. Catalyzes the S-adenosylmethionine monomethyl esterification of trans-aconitate. In Shigella flexneri, this protein is Trans-aconitate 2-methyltransferase.